Reading from the N-terminus, the 100-residue chain is uncharacterized protein (100 aa).

This is an uncharacterized protein from Rhizobium leguminosarum bv. phaseoli.